We begin with the raw amino-acid sequence, 98 residues long: NADH-ubiquinone oxidoreductase chain 4L (98 aa).

The next 3 helical transmembrane spans lie at 1 to 21 (MSLV…GLLM), 29 to 49 (SLLC…LMIL), and 61 to 81 (IILL…LVMV).

It belongs to the complex I subunit 4L family. In terms of assembly, core subunit of respiratory chain NADH dehydrogenase (Complex I) which is composed of 45 different subunits.

The protein resides in the mitochondrion inner membrane. The catalysed reaction is a ubiquinone + NADH + 5 H(+)(in) = a ubiquinol + NAD(+) + 4 H(+)(out). Functionally, core subunit of the mitochondrial membrane respiratory chain NADH dehydrogenase (Complex I) which catalyzes electron transfer from NADH through the respiratory chain, using ubiquinone as an electron acceptor. Part of the enzyme membrane arm which is embedded in the lipid bilayer and involved in proton translocation. This Capra hircus (Goat) protein is NADH-ubiquinone oxidoreductase chain 4L (MT-ND4L).